We begin with the raw amino-acid sequence, 141 residues long: Small ribosomal subunit protein bS6 (141 aa).

Positions 110–141 (SRTKVSDQPAAVEAAEAPAAPAAQEESAPASA) are disordered. The segment covering 117 to 141 (QPAAVEAAEAPAAPAAQEESAPASA) has biased composition (low complexity).

It belongs to the bacterial ribosomal protein bS6 family.

Binds together with bS18 to 16S ribosomal RNA. The protein is Small ribosomal subunit protein bS6 of Acidobacterium capsulatum (strain ATCC 51196 / DSM 11244 / BCRC 80197 / JCM 7670 / NBRC 15755 / NCIMB 13165 / 161).